A 231-amino-acid chain; its full sequence is 5'-methylthioadenosine/S-adenosylhomocysteine nucleosidase (231 aa).

Glu12 functions as the Proton acceptor in the catalytic mechanism. Substrate contacts are provided by residues Gly78, Ile153, and 174–175 (ME). The active-site Proton donor is the Asp198.

This sequence belongs to the PNP/UDP phosphorylase family. MtnN subfamily.

It catalyses the reaction S-adenosyl-L-homocysteine + H2O = S-(5-deoxy-D-ribos-5-yl)-L-homocysteine + adenine. It carries out the reaction S-methyl-5'-thioadenosine + H2O = 5-(methylsulfanyl)-D-ribose + adenine. The enzyme catalyses 5'-deoxyadenosine + H2O = 5-deoxy-D-ribose + adenine. Its pathway is amino-acid biosynthesis; L-methionine biosynthesis via salvage pathway; S-methyl-5-thio-alpha-D-ribose 1-phosphate from S-methyl-5'-thioadenosine (hydrolase route): step 1/2. Catalyzes the irreversible cleavage of the glycosidic bond in both 5'-methylthioadenosine (MTA) and S-adenosylhomocysteine (SAH/AdoHcy) to adenine and the corresponding thioribose, 5'-methylthioribose and S-ribosylhomocysteine, respectively. Also cleaves 5'-deoxyadenosine, a toxic by-product of radical S-adenosylmethionine (SAM) enzymes, into 5-deoxyribose and adenine. The chain is 5'-methylthioadenosine/S-adenosylhomocysteine nucleosidase from Maridesulfovibrio salexigens (strain ATCC 14822 / DSM 2638 / NCIMB 8403 / VKM B-1763) (Desulfovibrio salexigens).